A 307-amino-acid chain; its full sequence is MGSQLALKSRIHSTESLAKIFNAQEMIASSHIAKARDVALNAKPYSDAIFDAVQALVAHTHITHPIAVKDENNPRVAVLALTSDRGMAGPYTSSIIRETESLLSRLDAAGKQPELFVYGRRGSTYYKYRNRDIAATWEGNTDQPGVEIAETISDTLMDAYMKPAEKGGVSELYIVYTEFINMVVQKVRVLRMLPVEIVQNETKVPSPDEAAPSTADIAPLYTFEPSLEKVLDAILPKYIQSRIHECLLTAAASETASRQNAMHTATDNARNLIDDLTRKLNASRQASITQELTEIIGSADALTKKEE.

The protein belongs to the ATPase gamma chain family. As to quaternary structure, F-type ATPases have 2 components, CF(1) - the catalytic core - and CF(0) - the membrane proton channel. CF(1) has five subunits: alpha(3), beta(3), gamma(1), delta(1), epsilon(1). CF(0) has three main subunits: a, b and c.

The protein localises to the cell membrane. Its function is as follows. Produces ATP from ADP in the presence of a proton gradient across the membrane. The gamma chain is believed to be important in regulating ATPase activity and the flow of protons through the CF(0) complex. The protein is ATP synthase gamma chain of Bifidobacterium longum subsp. infantis (strain ATCC 15697 / DSM 20088 / JCM 1222 / NCTC 11817 / S12).